A 56-amino-acid polypeptide reads, in one-letter code: Small ribosomal subunit protein uS14 (56 aa).

Ser-9 carries the post-translational modification Phosphoserine. Arg-12 bears the Omega-N-methylarginine mark. Zn(2+) contacts are provided by Cys-21, Cys-24, Cys-39, and Cys-42. Position 48 is an N6-acetyllysine (Lys-48).

The protein belongs to the universal ribosomal protein uS14 family. In terms of assembly, component of the 40S small ribosomal subunit. Zn(2+) serves as cofactor.

It localises to the cytoplasm. Its subcellular location is the cytosol. It is found in the rough endoplasmic reticulum. Functionally, component of the small ribosomal subunit. The ribosome is a large ribonucleoprotein complex responsible for the synthesis of proteins in the cell. In Mus musculus (Mouse), this protein is Small ribosomal subunit protein uS14 (Rps29).